Here is a 672-residue protein sequence, read N- to C-terminus: Flap endonuclease 1 (672 aa).

The segment at M1–R106 is N-domain. D34 is a binding site for Mg(2+). Positions 47 and 72 each coordinate DNA. Residues D88, E160, E162, D181, and D183 each contribute to the Mg(2+) site. The segment at E124–Y266 is I-domain. Residue E160 coordinates DNA. The DNA site is built by G244 and D246. D246 serves as a coordination point for Mg(2+). The interaction with PCNA stretch occupies residues T349–F357. The disordered stretch occupies residues E371–I610. Composition is skewed to basic and acidic residues over residues M413 to L493, D502 to N526, and D535 to I548. Low complexity predominate over residues S549 to S584. Residues L587 to S603 are compositionally biased toward basic and acidic residues.

The protein belongs to the XPG/RAD2 endonuclease family. FEN1 subfamily. As to quaternary structure, interacts with PCNA1 and PCNA2. Three molecules of FEN1 bind to one PCNA trimer with each molecule binding to one PCNA monomer. PCNA stimulates the nuclease activity without altering cleavage specificity. Mg(2+) is required as a cofactor. Phosphorylated. Phosphorylation upon DNA damage induces relocalization to the nuclear plasma.

It localises to the nucleus. The protein localises to the nucleolus. Its subcellular location is the nucleoplasm. The protein resides in the mitochondrion. Functionally, structure-specific nuclease with 5'-flap endonuclease and 5'-3' exonuclease activities involved in DNA replication and repair. During DNA replication, cleaves the 5'-overhanging flap structure that is generated by displacement synthesis when DNA polymerase encounters the 5'-end of a downstream Okazaki fragment. It enters the flap from the 5'-end and then tracks to cleave the flap base, leaving a nick for ligation. Also involved in the long patch base excision repair (LP-BER) pathway, by cleaving within the apurinic/apyrimidinic (AP) site-terminated flap. Acts as a genome stabilization factor that prevents flaps from equilibrating into structures that lead to duplications and deletions. Also possesses 5'-3' exonuclease activity on nicked or gapped double-stranded DNA, and exhibits RNase H activity. Also involved in replication and repair of rDNA and in repairing mitochondrial DNA. The protein is Flap endonuclease 1 of Plasmodium falciparum (isolate 3D7).